A 309-amino-acid polypeptide reads, in one-letter code: L-lactate dehydrogenase 2 (309 aa).

NAD(+)-binding positions include Val16, Asp37, Tyr67, and Gly81–Val82. Arg90 contacts substrate. NAD(+) is bound at residue Ser103. Asn122–Asp125 contacts substrate. Thr145 is an NAD(+) binding site. Residue Asp150–Arg153 participates in substrate binding. The active-site Proton acceptor is the His177. Substrate is bound at residue Thr227.

The protein belongs to the LDH/MDH superfamily. LDH family. As to quaternary structure, homotetramer.

The protein localises to the cytoplasm. It carries out the reaction (S)-lactate + NAD(+) = pyruvate + NADH + H(+). Its pathway is fermentation; pyruvate fermentation to lactate; (S)-lactate from pyruvate: step 1/1. In terms of biological role, catalyzes the conversion of lactate to pyruvate. This Lactiplantibacillus plantarum (strain ATCC BAA-793 / NCIMB 8826 / WCFS1) (Lactobacillus plantarum) protein is L-lactate dehydrogenase 2.